A 66-amino-acid polypeptide reads, in one-letter code: Metallothionein (66 aa).

Residue Ser-1 is modified to N-acetylserine. Cd(2+)-binding residues include Cys-9, Cys-13, Cys-18, Cys-20, Cys-24, Cys-26, Cys-30, Cys-32, Cys-35, Cys-38, Cys-40, Cys-45, Cys-47, Cys-51, Cys-57, Cys-59, Cys-63, and Cys-65.

Belongs to the metallothionein superfamily. Type 2 family.

Functionally, the metallothioneins are involved in the cellular sequestration of toxic metal ions and regulation of essential trace elements. This chain is Metallothionein, found in Arianta arbustorum (Land snail).